Consider the following 235-residue polypeptide: Ubiquinone/menaquinone biosynthesis C-methyltransferase UbiE (235 aa).

Residues T60, D80, D106–V107, and S123 contribute to the S-adenosyl-L-methionine site.

This sequence belongs to the class I-like SAM-binding methyltransferase superfamily. MenG/UbiE family.

It catalyses the reaction a 2-demethylmenaquinol + S-adenosyl-L-methionine = a menaquinol + S-adenosyl-L-homocysteine + H(+). The enzyme catalyses a 2-methoxy-6-(all-trans-polyprenyl)benzene-1,4-diol + S-adenosyl-L-methionine = a 5-methoxy-2-methyl-3-(all-trans-polyprenyl)benzene-1,4-diol + S-adenosyl-L-homocysteine + H(+). It functions in the pathway quinol/quinone metabolism; menaquinone biosynthesis; menaquinol from 1,4-dihydroxy-2-naphthoate: step 2/2. Its pathway is cofactor biosynthesis; ubiquinone biosynthesis. Functionally, methyltransferase required for the conversion of demethylmenaquinol (DMKH2) to menaquinol (MKH2) and the conversion of 2-polyprenyl-6-methoxy-1,4-benzoquinol (DDMQH2) to 2-polyprenyl-3-methyl-6-methoxy-1,4-benzoquinol (DMQH2). In Bdellovibrio bacteriovorus (strain ATCC 15356 / DSM 50701 / NCIMB 9529 / HD100), this protein is Ubiquinone/menaquinone biosynthesis C-methyltransferase UbiE.